The chain runs to 689 residues: Methionine--tRNA ligase (689 aa).

Positions 19–29 (PYPTGDLHIGH) match the 'HIGH' region motif. Cys150, Cys153, Cys162, and Cys166 together coordinate Zn(2+). The 'KMSKS' region motif lies at 338-342 (GLSTS). Position 341 (Thr341) interacts with ATP. Positions 591–689 (EFQALDLRVG…EDSEPGTKVM (99 aa)) constitute a tRNA-binding domain.

The protein belongs to the class-I aminoacyl-tRNA synthetase family. MetG type 1 subfamily. Homodimer. The cofactor is Zn(2+).

Its subcellular location is the cytoplasm. The catalysed reaction is tRNA(Met) + L-methionine + ATP = L-methionyl-tRNA(Met) + AMP + diphosphate. Is required not only for elongation of protein synthesis but also for the initiation of all mRNA translation through initiator tRNA(fMet) aminoacylation. This is Methionine--tRNA ligase from Halobacterium salinarum (strain ATCC 700922 / JCM 11081 / NRC-1) (Halobacterium halobium).